Reading from the N-terminus, the 239-residue chain is Phosphoribosylaminoimidazole-succinocarboxamide synthase (239 aa).

Belongs to the SAICAR synthetase family.

It catalyses the reaction 5-amino-1-(5-phospho-D-ribosyl)imidazole-4-carboxylate + L-aspartate + ATP = (2S)-2-[5-amino-1-(5-phospho-beta-D-ribosyl)imidazole-4-carboxamido]succinate + ADP + phosphate + 2 H(+). It functions in the pathway purine metabolism; IMP biosynthesis via de novo pathway; 5-amino-1-(5-phospho-D-ribosyl)imidazole-4-carboxamide from 5-amino-1-(5-phospho-D-ribosyl)imidazole-4-carboxylate: step 1/2. The chain is Phosphoribosylaminoimidazole-succinocarboxamide synthase from Nitratiruptor sp. (strain SB155-2).